A 323-amino-acid polypeptide reads, in one-letter code: Lipoyl synthase (323 aa).

Positions 69, 74, 80, 95, 99, 102, and 310 each coordinate [4Fe-4S] cluster. One can recognise a Radical SAM core domain in the interval 81–299; sequence WTHGTLTVMI…EAWGYELGFR (219 aa).

This sequence belongs to the radical SAM superfamily. Lipoyl synthase family. [4Fe-4S] cluster is required as a cofactor.

The protein localises to the cytoplasm. The enzyme catalyses [[Fe-S] cluster scaffold protein carrying a second [4Fe-4S](2+) cluster] + N(6)-octanoyl-L-lysyl-[protein] + 2 oxidized [2Fe-2S]-[ferredoxin] + 2 S-adenosyl-L-methionine + 4 H(+) = [[Fe-S] cluster scaffold protein] + N(6)-[(R)-dihydrolipoyl]-L-lysyl-[protein] + 4 Fe(3+) + 2 hydrogen sulfide + 2 5'-deoxyadenosine + 2 L-methionine + 2 reduced [2Fe-2S]-[ferredoxin]. It participates in protein modification; protein lipoylation via endogenous pathway; protein N(6)-(lipoyl)lysine from octanoyl-[acyl-carrier-protein]: step 2/2. In terms of biological role, catalyzes the radical-mediated insertion of two sulfur atoms into the C-6 and C-8 positions of the octanoyl moiety bound to the lipoyl domains of lipoate-dependent enzymes, thereby converting the octanoylated domains into lipoylated derivatives. In Thermus thermophilus (strain ATCC 27634 / DSM 579 / HB8), this protein is Lipoyl synthase.